The sequence spans 985 residues: UPF0182 protein cgR_0895 (985 aa).

Transmembrane regions (helical) follow at residues 19 to 39, 63 to 83, 115 to 135, 176 to 196, 215 to 235, 262 to 282, and 290 to 310; these read VTWI…SVGF, IVLF…AGYF, VMVL…QRSW, SMML…MGGI, TQLA…YWLD, KIIL…AIFL, and LAVV…PLML. The disordered stretch occupies residues 906–944; the sequence is AQDIEEVDGTTTTPSTDETDTDTDQPATETPTAPVSEAE. Positions 929–939 are enriched in low complexity; sequence DQPATETPTAP.

It belongs to the UPF0182 family.

It is found in the cell membrane. This is UPF0182 protein cgR_0895 from Corynebacterium glutamicum (strain R).